Reading from the N-terminus, the 261-residue chain is 3-methyl-2-oxobutanoate hydroxymethyltransferase (261 aa).

Mg(2+)-binding residues include D42 and D81. 3-methyl-2-oxobutanoate contacts are provided by residues 42–43 (DS), D81, and K110. E112 contributes to the Mg(2+) binding site. The active-site Proton acceptor is the E179.

It belongs to the PanB family. As to quaternary structure, homodecamer; pentamer of dimers. Mg(2+) is required as a cofactor.

The protein resides in the cytoplasm. The catalysed reaction is 3-methyl-2-oxobutanoate + (6R)-5,10-methylene-5,6,7,8-tetrahydrofolate + H2O = 2-dehydropantoate + (6S)-5,6,7,8-tetrahydrofolate. It functions in the pathway cofactor biosynthesis; (R)-pantothenate biosynthesis; (R)-pantoate from 3-methyl-2-oxobutanoate: step 1/2. In terms of biological role, catalyzes the reversible reaction in which hydroxymethyl group from 5,10-methylenetetrahydrofolate is transferred onto alpha-ketoisovalerate to form ketopantoate. This is 3-methyl-2-oxobutanoate hydroxymethyltransferase from Thermus thermophilus (strain ATCC BAA-163 / DSM 7039 / HB27).